We begin with the raw amino-acid sequence, 403 residues long: Putative glutamate--cysteine ligase 2 (403 aa).

Residues 370–403 form a disordered region; that stretch reads ESAAQRRAPQAARRRIRASSEPLGPMSMWPERLH.

This sequence belongs to the glutamate--cysteine ligase type 2 family. YbdK subfamily.

The enzyme catalyses L-cysteine + L-glutamate + ATP = gamma-L-glutamyl-L-cysteine + ADP + phosphate + H(+). ATP-dependent carboxylate-amine ligase which exhibits weak glutamate--cysteine ligase activity. In Bordetella avium (strain 197N), this protein is Putative glutamate--cysteine ligase 2.